Consider the following 350-residue polypeptide: tRNA uridine(34) hydroxylase (350 aa).

The 94-residue stretch at 128 to 221 folds into the Rhodanese domain; that stretch reads EETDYVMIDT…YMKEYPNDQF (94 aa). Cys181 acts as the Cysteine persulfide intermediate in catalysis.

The protein belongs to the TrhO family.

It catalyses the reaction uridine(34) in tRNA + AH2 + O2 = 5-hydroxyuridine(34) in tRNA + A + H2O. Functionally, catalyzes oxygen-dependent 5-hydroxyuridine (ho5U) modification at position 34 in tRNAs. The protein is tRNA uridine(34) hydroxylase of Bdellovibrio bacteriovorus (strain ATCC 15356 / DSM 50701 / NCIMB 9529 / HD100).